We begin with the raw amino-acid sequence, 138 residues long: Large ribosomal subunit protein bL19 (138 aa).

The protein belongs to the bacterial ribosomal protein bL19 family.

This protein is located at the 30S-50S ribosomal subunit interface and may play a role in the structure and function of the aminoacyl-tRNA binding site. This Rickettsia massiliae (strain Mtu5) protein is Large ribosomal subunit protein bL19.